Consider the following 262-residue polypeptide: Putative hydroxypyruvate isomerase (262 aa).

Catalysis depends on proton donor/acceptor residues Glu146 and Glu244.

Belongs to the hyi family.

It carries out the reaction 3-hydroxypyruvate = 2-hydroxy-3-oxopropanoate. Its function is as follows. Catalyzes the reversible isomerization between hydroxypyruvate and 2-hydroxy-3-oxopropanoate (also termed tartronate semialdehyde). This is Putative hydroxypyruvate isomerase from Caenorhabditis elegans.